The sequence spans 299 residues: Methionyl-tRNA formyltransferase (299 aa).

109–112 (SLLP) contacts (6S)-5,6,7,8-tetrahydrofolate.

The protein belongs to the Fmt family.

It carries out the reaction L-methionyl-tRNA(fMet) + (6R)-10-formyltetrahydrofolate = N-formyl-L-methionyl-tRNA(fMet) + (6S)-5,6,7,8-tetrahydrofolate + H(+). Its function is as follows. Attaches a formyl group to the free amino group of methionyl-tRNA(fMet). The formyl group appears to play a dual role in the initiator identity of N-formylmethionyl-tRNA by promoting its recognition by IF2 and preventing the misappropriation of this tRNA by the elongation apparatus. This Dinoroseobacter shibae (strain DSM 16493 / NCIMB 14021 / DFL 12) protein is Methionyl-tRNA formyltransferase.